The chain runs to 339 residues: Phenylalanine--tRNA ligase alpha subunit (339 aa).

Glutamate 253 contributes to the Mg(2+) binding site.

It belongs to the class-II aminoacyl-tRNA synthetase family. Phe-tRNA synthetase alpha subunit type 1 subfamily. As to quaternary structure, tetramer of two alpha and two beta subunits. Mg(2+) is required as a cofactor.

Its subcellular location is the cytoplasm. The catalysed reaction is tRNA(Phe) + L-phenylalanine + ATP = L-phenylalanyl-tRNA(Phe) + AMP + diphosphate + H(+). The sequence is that of Phenylalanine--tRNA ligase alpha subunit from Ruthia magnifica subsp. Calyptogena magnifica.